The sequence spans 526 residues: ESX-1 secretion-associated protein EspB (526 aa).

A compositionally biased stretch (basic and acidic residues) spans 1-23; the sequence is MSEELKYELPGLERKAHECESTR. Disordered regions lie at residues 1–35, 91–110, and 271–526; these read MSEE…KPDE, RQMN…VPDM, and QIQE…GKQQ. Gly residues predominate over residues 303–328; it reads GGPGGPGSGSGGGSGGGASGGSGGGT. The span at 335–362 shows a compositional bias: low complexity; it reads PSTDPSMSPMSTNSAGEEQSSGSPSSGG. Residues 363–387 show a composition bias toward gly residues; that stretch reads SSSGGSPSGGSPSGGGAPSSGGMPE. A compositionally biased stretch (low complexity) spans 393 to 405; that stretch reads DMPGGPDIPGLDD. The segment covering 413–429 has biased composition (gly residues); that stretch reads AGGGGGGGVGGGGGGGM. Residues 430–440 show a composition bias toward low complexity; that stretch reads PAAPLGPAVGA. Positions 451 to 484 are enriched in gly residues; that stretch reads RGGGVGVPTGTGGGAGGMMGGGMGGMGAGHGQGQ. A compositionally biased stretch (basic and acidic residues) spans 485 to 508; that stretch reads GKEKKRDPKLAPDEDLYTEDRAHS.

It belongs to the EspB family.

It is found in the secreted. In terms of biological role, involved in DNA conjugation, at least in the recipient strain. The protein is ESX-1 secretion-associated protein EspB of Mycolicibacterium smegmatis (strain MKD8) (Mycobacterium smegmatis).